A 398-amino-acid chain; its full sequence is Fatty-acid-binding protein 2 (398 aa).

Positions 222, 235, and 302 each coordinate dodecanoate.

This sequence belongs to the chalcone isomerase family. Expressed in developing cotyledons, young seedlings, roots, seeds, embryos, macrospores, preanthesis and tapetum. Restricted to developing and reproductive tissues.

The protein resides in the plastid. Its subcellular location is the chloroplast stroma. Its function is as follows. Fatty-acid-binding protein. Associates with saturated fatty acid. In Arabidopsis thaliana (Mouse-ear cress), this protein is Fatty-acid-binding protein 2 (FAP2).